A 389-amino-acid chain; its full sequence is Gustatory receptor for bitter taste 22e (389 aa).

Over 1 to 14 (MFRPSGSGYRQKWT) the chain is Cytoplasmic. The chain crosses the membrane as a helical span at residues 15-35 (GLTLKGALYGSWILGVFPFAY). The Extracellular segment spans residues 36-46 (DSWTRTLRRSK). Residues 47–67 (WLIAYGFVLNAAFILLVVTND) form a helical membrane-spanning segment. Residues 68–142 (TESETPLRME…SLEECISFDR (75 aa)) are Cytoplasmic-facing. A helical membrane pass occupies residues 143–163 (FVLYKGFSVVLELVSMLVLEL). Over 164–170 (GMSPNYS) the chain is Extracellular. Asparagine 168 carries an N-linked (GlcNAc...) asparagine glycan. Residues 171–191 (AQFFIGLGSLCLMLLAVLLGA) form a helical membrane-spanning segment. Over 192–254 (SHFHLAVVFV…QRLASIYDYQ (63 aa)) the chain is Cytoplasmic. A helical transmembrane segment spans residues 255–275 (MVMVMVSFLIANVLGIYFFII). Over 276-287 (YSISLNKSLDFK) the chain is Extracellular. Residue asparagine 281 is glycosylated (N-linked (GlcNAc...) asparagine). A helical transmembrane segment spans residues 288-308 (ILVFVQALVINMLDFWLNVEI). Residues 309–366 (CELAERTGRQTSTILKLFNDIENIDEKLERSITDFALFCSHRRLRFHHCGLFYVNYEM) lie on the Cytoplasmic side of the membrane. Residues 367–387 (GFRMAITSFLYLLFLIQFDYW) form a helical membrane-spanning segment. The Extracellular segment spans residues 388–389 (NL).

It belongs to the insect chemoreceptor superfamily. Gustatory receptor (GR) family. Gr22e subfamily. In terms of tissue distribution, taste bristles on the labial palp, labral and cibarial sense organs, chemosensory bristles on the leg and anterior wing margin. In larvae, is expressed in neurons of the terminal external chemosensory organ and in the dorsal pharyngeal sense organ. Neurons expressing Gr22e also express Gr66a and correspond to taste neurons that mediate sensitivity to bitter compounds.

It localises to the cell membrane. Its function is as follows. Gustatory receptor which mediates acceptance or avoidance behavior, depending on its substrates. Seems to be involved in the sensing of bitter taste since it is expressed in neurons that mediate sensitivity to bitter compounds which are also avoidance-type taste neurons. The polypeptide is Gustatory receptor for bitter taste 22e (Gr22e) (Drosophila melanogaster (Fruit fly)).